Here is a 155-residue protein sequence, read N- to C-terminus: Ribosome maturation factor RimP (155 aa).

It belongs to the RimP family.

It localises to the cytoplasm. In terms of biological role, required for maturation of 30S ribosomal subunits. The polypeptide is Ribosome maturation factor RimP (Prochlorococcus marinus subsp. pastoris (strain CCMP1986 / NIES-2087 / MED4)).